Here is a 284-residue protein sequence, read N- to C-terminus: Probable endonuclease 4 (284 aa).

Positions 69, 109, 145, 179, 182, 216, 229, 231, and 261 each coordinate Zn(2+).

It belongs to the AP endonuclease 2 family. Requires Zn(2+) as cofactor.

It carries out the reaction Endonucleolytic cleavage to 5'-phosphooligonucleotide end-products.. Functionally, endonuclease IV plays a role in DNA repair. It cleaves phosphodiester bonds at apurinic or apyrimidinic (AP) sites, generating a 3'-hydroxyl group and a 5'-terminal sugar phosphate. The polypeptide is Probable endonuclease 4 (Klebsiella pneumoniae subsp. pneumoniae (strain ATCC 700721 / MGH 78578)).